The primary structure comprises 178 residues: Large ribosomal subunit protein uL6 (178 aa).

This sequence belongs to the universal ribosomal protein uL6 family. As to quaternary structure, part of the 50S ribosomal subunit.

Its function is as follows. This protein binds to the 23S rRNA, and is important in its secondary structure. It is located near the subunit interface in the base of the L7/L12 stalk, and near the tRNA binding site of the peptidyltransferase center. The protein is Large ribosomal subunit protein uL6 of Desulfatibacillum aliphaticivorans.